Here is a 375-residue protein sequence, read N- to C-terminus: 4,4'-diaponeurosporenoate glycosyltransferase (375 aa).

Transmembrane regions (helical) follow at residues 3 to 23, 164 to 184, 277 to 297, and 330 to 350; these read WLSR…ALIF, FYEG…NVFS, IMTA…GLCL, and FSNL…KIFI.

Belongs to the glycosyltransferase 2 family. CrtQ subfamily.

It localises to the cell membrane. It functions in the pathway carotenoid biosynthesis; staphyloxanthin biosynthesis; staphyloxanthin from farnesyl diphosphate: step 4/5. Its function is as follows. Catalyzes the glycosylation of 4,4'-diaponeurosporenoate, i.e. the esterification of glucose at the C1'' position with the carboxyl group of 4,4'-diaponeurosporenic acid, to form glycosyl-4,4'-diaponeurosporenoate. This is a step in the biosynthesis of staphyloxanthin, an orange pigment present in most staphylococci strains. In Staphylococcus aureus (strain Mu50 / ATCC 700699), this protein is 4,4'-diaponeurosporenoate glycosyltransferase (crtQ).